We begin with the raw amino-acid sequence, 158 residues long: Transcriptional regulator MraZ (158 aa).

SpoVT-AbrB domains follow at residues K7–V66 and L95–K138.

It belongs to the MraZ family. As to quaternary structure, forms oligomers.

Its subcellular location is the cytoplasm. The protein resides in the nucleoid. This is Transcriptional regulator MraZ from Prosthecochloris aestuarii (strain DSM 271 / SK 413).